We begin with the raw amino-acid sequence, 304 residues long: Probable solute-binding protein AdeT1 (304 aa).

This sequence belongs to the bacterial solute-binding protein 7 family.

Its function is as follows. Mediates antimicrobial resistance via active efflux. Contributes to resistance to antibiotics such as chloramphenicol, erythromycin and novobiocin. May be part of a tripartite ATP-independent periplasmic (TRAP) transport system. The protein is Probable solute-binding protein AdeT1 of Acinetobacter baumannii.